We begin with the raw amino-acid sequence, 120 residues long: Large ribosomal subunit protein bL19 (120 aa).

The protein belongs to the bacterial ribosomal protein bL19 family.

Its function is as follows. This protein is located at the 30S-50S ribosomal subunit interface and may play a role in the structure and function of the aminoacyl-tRNA binding site. This chain is Large ribosomal subunit protein bL19, found in Kocuria rhizophila (strain ATCC 9341 / DSM 348 / NBRC 103217 / DC2201).